Consider the following 554-residue polypeptide: Valerianol synthase TPS1E (554 aa).

D307 and D311 together coordinate Mg(2+). The DDXXD motif motif lies at 326–330 (VQRWD). 3 residues coordinate Mg(2+): D452, S456, and E460.

It belongs to the terpene synthase family. The cofactor is Mg(2+).

It carries out the reaction (2E,6E)-farnesyl diphosphate + H2O = valerianol + diphosphate. It functions in the pathway secondary metabolite biosynthesis; terpenoid biosynthesis. Terpene synthase that catalyzes the biosynthesis of the terpene valerianol, which is a volatile compound of floral scent. The polypeptide is Valerianol synthase TPS1E (Camellia hiemalis (Camellia)).